The following is a 249-amino-acid chain: Homeobox protein TGIF2LX (249 aa).

Disordered stretches follow at residues 1–62 (MEAA…KRKG) and 126–192 (DPIV…KLTV). Over residues 9-27 (AETRSRVEKDSRRAKKDSP) the composition is skewed to basic and acidic residues. Polar residues predominate over residues 28–46 (AKTQSPAQDTSIMLRNNAD). A DNA-binding region (homeobox; TALE-type) is located at residues 55 to 118 (EHKKKRKGYL…INARRRILPD (64 aa)). Residues 159 to 172 (DNVQSLPLRSSPKG) show a composition bias toward polar residues.

Belongs to the TALE/TGIF homeobox family.

The protein localises to the nucleus. Its function is as follows. May have a transcription role in testis. The sequence is that of Homeobox protein TGIF2LX (TGIF2LX) from Macaca fascicularis (Crab-eating macaque).